We begin with the raw amino-acid sequence, 463 residues long: Asparagine--tRNA ligase (463 aa).

This sequence belongs to the class-II aminoacyl-tRNA synthetase family. As to quaternary structure, homodimer.

Its subcellular location is the cytoplasm. It carries out the reaction tRNA(Asn) + L-asparagine + ATP = L-asparaginyl-tRNA(Asn) + AMP + diphosphate + H(+). The chain is Asparagine--tRNA ligase from Alkaliphilus oremlandii (strain OhILAs) (Clostridium oremlandii (strain OhILAs)).